Consider the following 739-residue polypeptide: Double-strand break repair protein mus-23 (739 aa).

The Mn(2+) site is built by Asp16, His18, Asp56, and Asn123. His124 functions as the Proton donor in the catalytic mechanism. 3 residues coordinate Mn(2+): His212, His240, and His242. The segment at 516-739 (FDAGQHKQAQ…KPGLLARRLG (224 aa)) is disordered. Basic residues predominate over residues 523–532 (QAQRTKRFKR). Over residues 559 to 568 (VEPKGNDRPT) the composition is skewed to basic and acidic residues. Over residues 599–636 (KRGAAAKTTAAAKKAAPGKKAAPAKKAAPAKKAAPAKK) the composition is skewed to low complexity. Residues 637-646 (APARGRKKKT) show a composition bias toward basic residues. The segment covering 650–686 (DSDEEEEEDYPEDDDEEEEEADEEEEDVIMEDDEEDP) has biased composition (acidic residues). The segment covering 694–722 (KATSRVASTRASARATPVRATPARATQAR) has biased composition (low complexity).

The protein belongs to the MRE11/RAD32 family. Component of the MRN complex composed of two heterodimers RAD50 and MRE11 associated with a single NBS1. Mn(2+) serves as cofactor.

It is found in the nucleus. The protein localises to the chromosome. Its subcellular location is the telomere. In terms of biological role, core component of the MRN complex, which plays a central role in double-strand break (DSB) repair, DNA recombination, maintenance of telomere integrity and meiosis. The MRN complex is involved in the repair of DNA double-strand breaks (DSBs) via homologous recombination (HR), an error-free mechanism which primarily occurs during S and G2 phases. The complex (1) mediates the end resection of damaged DNA, which generates proper single-stranded DNA, a key initial steps in HR, and is (2) required for the recruitment of other repair factors and efficient activation of ATM and ATR upon DNA damage. Within the MRN complex, MRE11 possesses both single-strand endonuclease activity and double-strand-specific 3'-5' exonuclease activity. MRE11 first endonucleolytically cleaves the 5' strand at DNA DSB ends to prevent non-homologous end joining (NHEJ) and licence HR. It then generates a single-stranded DNA gap via 3' to 5' exonucleolytic degradation, which is required for single-strand invasion and recombination. The MRN complex is also required for the processing of R-loops. The sequence is that of Double-strand break repair protein mus-23 (mus-23) from Neurospora crassa (strain ATCC 24698 / 74-OR23-1A / CBS 708.71 / DSM 1257 / FGSC 987).